Here is a 361-residue protein sequence, read N- to C-terminus: Cytosolic Fe-S cluster assembly factor CFD1 (361 aa).

Residue 37–44 (GKGGVGKS) coordinates ATP. [4Fe-4S] cluster is bound by residues Cys218 and Cys221. The interval 293–314 (HSQSAAAQLPNSGDTESLTPAG) is disordered.

Belongs to the Mrp/NBP35 ATP-binding proteins family. NUBP2/CFD1 subfamily. Heterotetramer of 2 NBP35 and 2 CFD1 chains. Requires [4Fe-4S] cluster as cofactor.

Its subcellular location is the cytoplasm. Component of the cytosolic iron-sulfur (Fe/S) protein assembly (CIA) machinery. Required for maturation of extramitochondrial Fe-S proteins. The NBP35-CFD1 heterotetramer forms a Fe-S scaffold complex, mediating the de novo assembly of an Fe-S cluster and its transfer to target apoproteins. The chain is Cytosolic Fe-S cluster assembly factor CFD1 from Mycosarcoma maydis (Corn smut fungus).